Consider the following 104-residue polypeptide: Met repressor (104 aa).

This sequence belongs to the MetJ family. As to quaternary structure, homodimer.

It localises to the cytoplasm. Its function is as follows. This regulatory protein, when combined with SAM (S-adenosylmethionine) represses the expression of the methionine regulon and of enzymes involved in SAM synthesis. The protein is Met repressor of Shewanella oneidensis (strain ATCC 700550 / JCM 31522 / CIP 106686 / LMG 19005 / NCIMB 14063 / MR-1).